A 383-amino-acid chain; its full sequence is Lipid-A-disaccharide synthase (383 aa).

This sequence belongs to the LpxB family.

The catalysed reaction is a lipid X + a UDP-2-N,3-O-bis[(3R)-3-hydroxyacyl]-alpha-D-glucosamine = a lipid A disaccharide + UDP + H(+). It functions in the pathway bacterial outer membrane biogenesis; LPS lipid A biosynthesis. Condensation of UDP-2,3-diacylglucosamine and 2,3-diacylglucosamine-1-phosphate to form lipid A disaccharide, a precursor of lipid A, a phosphorylated glycolipid that anchors the lipopolysaccharide to the outer membrane of the cell. This is Lipid-A-disaccharide synthase from Alcanivorax borkumensis (strain ATCC 700651 / DSM 11573 / NCIMB 13689 / SK2).